The chain runs to 466 residues: Asparagine--tRNA ligase (466 aa).

It belongs to the class-II aminoacyl-tRNA synthetase family. In terms of assembly, homodimer.

The protein localises to the cytoplasm. It carries out the reaction tRNA(Asn) + L-asparagine + ATP = L-asparaginyl-tRNA(Asn) + AMP + diphosphate + H(+). This is Asparagine--tRNA ligase from Vibrio parahaemolyticus serotype O3:K6 (strain RIMD 2210633).